The following is a 178-amino-acid chain: Interleukin-10 (178 aa).

An N-terminal signal peptide occupies residues 1–18; sequence MPRSALLCCLILLAGVAA. 2 cysteine pairs are disulfide-bonded: Cys-30–Cys-126 and Cys-80–Cys-132. Asn-134 is a glycosylation site (N-linked (GlcNAc...) asparagine).

Belongs to the IL-10 family. In terms of assembly, homodimer. Interacts with IL10RA and IL10RB.

The protein resides in the secreted. Functionally, major immune regulatory cytokine that acts on many cells of the immune system where it has profound anti-inflammatory functions, limiting excessive tissue disruption caused by inflammation. Mechanistically, IL10 binds to its heterotetrameric receptor comprising IL10RA and IL10RB leading to JAK1 and STAT2-mediated phosphorylation of STAT3. In turn, STAT3 translocates to the nucleus where it drives expression of anti-inflammatory mediators. Targets antigen-presenting cells (APCs) such as macrophages and monocytes and inhibits their release of pro-inflammatory cytokines including granulocyte-macrophage colony-stimulating factor /GM-CSF, granulocyte colony-stimulating factor/G-CSF, IL-1 alpha, IL-1 beta, IL-6, IL-8 and TNF-alpha. Also interferes with antigen presentation by reducing the expression of MHC-class II and co-stimulatory molecules, thereby inhibiting their ability to induce T cell activation. In addition, controls the inflammatory response of macrophages by reprogramming essential metabolic pathways including mTOR signaling. This chain is Interleukin-10 (IL10), found in Lama glama (Llama).